Here is a 142-residue protein sequence, read N- to C-terminus: MKTPRRRMRLAVFKALFQHEFRRDEDLEQILEEILDETYDKKAKEDARRYIRGIKENLPMIDNLISRYLEKWSLNRLSAVDRNVLRLATYELLFEKDIPIEATIDEAIEIAKRYGTENSGKFVNGILDRIAKEHAPKEKFEL.

The protein belongs to the NusB family.

In terms of biological role, involved in transcription antitermination. Required for transcription of ribosomal RNA (rRNA) genes. Binds specifically to the boxA antiterminator sequence of the ribosomal RNA (rrn) operons. In Thermotoga petrophila (strain ATCC BAA-488 / DSM 13995 / JCM 10881 / RKU-1), this protein is Transcription antitermination protein NusB.